A 141-amino-acid chain; its full sequence is Small ribosomal subunit protein eS17w (141 aa).

This sequence belongs to the eukaryotic ribosomal protein eS17 family.

In Arabidopsis thaliana (Mouse-ear cress), this protein is Small ribosomal subunit protein eS17w (RPS17D).